The following is a 236-amino-acid chain: Small ribosomal subunit protein uS2c (236 aa).

This sequence belongs to the universal ribosomal protein uS2 family.

It is found in the plastid. The protein resides in the chloroplast. The sequence is that of Small ribosomal subunit protein uS2c (rps2) from Chaetosphaeridium globosum (Charophycean green alga).